The primary structure comprises 435 residues: Fez family zinc finger protein 2 (435 aa).

The Engrailed homology 1 repressor signature appears at 27–42 (SLAFSIERIMAKTSEP). 6 consecutive C2H2-type zinc fingers follow at residues 254-276 (FTCE…MPVH), 282-304 (FVCK…KIIH), 310-332 (HKCN…IRIH), 338-360 (FVCE…KLTH), 366-388 (YKCT…MHTH), and 394-417 (FTCG…RKLH).

This sequence belongs to the krueppel C2H2-type zinc-finger protein family.

The protein resides in the nucleus. Transcription repressor. Component of the regulatory cascade that controls the development of dopaminergic (DA) and serotonergic (5HT) neurons. The protein is Fez family zinc finger protein 2 (fezf2) of Xenopus tropicalis (Western clawed frog).